Reading from the N-terminus, the 577-residue chain is Adenine deaminase (577 aa).

This sequence belongs to the metallo-dependent hydrolases superfamily. Adenine deaminase family. Mn(2+) serves as cofactor.

The catalysed reaction is adenine + H2O + H(+) = hypoxanthine + NH4(+). This Kosmotoga olearia (strain ATCC BAA-1733 / DSM 21960 / TBF 19.5.1) protein is Adenine deaminase.